Consider the following 344-residue polypeptide: Protein pelota homolog (344 aa).

The protein belongs to the eukaryotic release factor 1 family. Pelota subfamily. As to quaternary structure, monomer. A divalent metal cation is required as a cofactor.

The protein resides in the cytoplasm. Its function is as follows. May function in recognizing stalled ribosomes, interact with stem-loop structures in stalled mRNA molecules, and effect endonucleolytic cleavage of the mRNA. May play a role in the release non-functional ribosomes and degradation of damaged mRNAs. Has endoribonuclease activity. This Archaeoglobus fulgidus (strain ATCC 49558 / DSM 4304 / JCM 9628 / NBRC 100126 / VC-16) protein is Protein pelota homolog.